A 63-amino-acid polypeptide reads, in one-letter code: Conotoxin TeAr193 (63 aa).

Residues 1–22 (MRCLPVFVILLLLIASAPSVDA) form the signal peptide. The propeptide occupies 23–48 (QPKTKDDIPQASFLDNAKRYLQVLES).

This sequence belongs to the conotoxin T superfamily. In terms of processing, contains 2 disulfide bonds that can be either 'C1-C3, C2-C4' or 'C1-C4, C2-C3', since these disulfide connectivities have been observed for conotoxins with cysteine framework V (for examples, see AC P0DQQ7 and AC P81755). Expressed by the venom duct.

The protein resides in the secreted. In Conus textile (Cloth-of-gold cone), this protein is Conotoxin TeAr193.